Reading from the N-terminus, the 823-residue chain is Putative E3 ubiquitin-protein ligase RF4 (823 aa).

Disordered stretches follow at residues 24–72 (TVSP…NGSV), 224–291 (SKLS…CSGS), and 432–464 (ESVTLIPSASEKKSDSSIPSTSEKKSGSESEEK). The segment covering 61–72 (KPQNHLSGNGSV) has biased composition (polar residues). Low complexity predominate over residues 224–240 (SKLSDSESLGAESNPPK). Positions 267–282 (FPNTPNSKKTQSSGTT) are enriched in polar residues. The span at 453–464 (SEKKSGSESEEK) shows a compositional bias: basic and acidic residues. Positions 536–738 (ELKALRKERE…ELKLKSDYSR (203 aa)) form a coiled coil. The RING-type zinc-finger motif lies at 768–808 (CVMCLSEEMSVIFLPCAHQVLCFKCNQLHEKEGMMDCPSCR).

This sequence belongs to the RING-type zinc finger family.

The catalysed reaction is S-ubiquitinyl-[E2 ubiquitin-conjugating enzyme]-L-cysteine + [acceptor protein]-L-lysine = [E2 ubiquitin-conjugating enzyme]-L-cysteine + N(6)-ubiquitinyl-[acceptor protein]-L-lysine.. It functions in the pathway protein modification; protein ubiquitination. The sequence is that of Putative E3 ubiquitin-protein ligase RF4 (RF4) from Arabidopsis thaliana (Mouse-ear cress).